Consider the following 310-residue polypeptide: MPQVKVTASAPCSSANLGSGFDTLAIALDAFHDRVTISDHDGFKLTGEGIPLDPERNTAGLAAIALLDELGLERDIEIRIEKGVPKGLGLGSSGASAAAAVKALDAYFGLGLTQEEMIGYAMIGEIASSGSPHPDNVSASIIGGLVLVTHDDDLRASRINISGDYRFLVAIPDLFTENKTRAARQMLPRSIPLDSYSKALGRTASLIAGLMSGNRNLIRVGMNDDIVEPSRISLFPYYYDMKRMALANEAVAAAVSGAGPSILMVCDEMSDMDSIRAGISEIFSRYNITGRVIEARMSGGAFVEGSPVSD.

85–95 (PKGLGLGSSGA) lines the ATP pocket.

Belongs to the GHMP kinase family. Homoserine kinase subfamily.

The protein localises to the cytoplasm. It carries out the reaction L-homoserine + ATP = O-phospho-L-homoserine + ADP + H(+). The protein operates within amino-acid biosynthesis; L-threonine biosynthesis; L-threonine from L-aspartate: step 4/5. Catalyzes the ATP-dependent phosphorylation of L-homoserine to L-homoserine phosphate. This chain is Homoserine kinase, found in Thermoplasma acidophilum (strain ATCC 25905 / DSM 1728 / JCM 9062 / NBRC 15155 / AMRC-C165).